A 56-amino-acid chain; its full sequence is uncharacterized protein (56 aa).

The helical transmembrane segment at 12–32 threads the bilayer; it reads GITLFPYFAILILILAILVVG. Positions 19–31 are hydrophobic; the sequence is FAILILILAILVV.

The protein resides in the membrane. This is an uncharacterized protein from Chenopodium amaranticolor (Quinoa).